The chain runs to 505 residues: MSSIDRSQSAGGTRTYEVRTYGCQMNVHDSERLSGLLEDAGYVRAPEGADGDADVVVFNTCAVRENADNKLYGNLGHLAPKKASRPGMQIAVGGCLAQKDRDTIVKRAPWVDVVFGTHNIGKLPVLLERARVQEEAQVEIAESLEAFPSTLPTRRESAYAAWVSISVGCNNTCTFCIVPALRGKEKDRRPGDILAEVEALVAEGVSEITLLGQNVNAYGSDIGDREAFSKLLRACGNIDGLERVRFTSPHPRDFTDDVIAAMAETPNAMPQLHMPLQSGSDPVLKAMRRSYRQERYLGIIEKVRAAIPHAAITTDIIVGFPGETEEDFEQTLHVVREARFAQAFTFQYSKRPGTPAAEMENQIPKAVVQERYERLVALQEEISWDENKKQVGRTLELMVAEGEGRKDGATHRLSGRAPDNRLVHFTKPDQEVRPGDVVTVEITYAAPHHLLAEGAVLDVRRTRAGDAWEKRNTAEQAKPAGVLLGLPKIGVPEPQPVVASGCGCD.

The 119-residue stretch at 14–132 (RTYEVRTYGC…LPVLLERARV (119 aa)) folds into the MTTase N-terminal domain. Residues Cys-23, Cys-61, Cys-95, Cys-169, Cys-173, and Cys-176 each coordinate [4Fe-4S] cluster. Positions 155–386 (RESAYAAWVS…ALQEEISWDE (232 aa)) constitute a Radical SAM core domain. Residues 388 to 456 (KKQVGRTLEL…PHHLLAEGAV (69 aa)) enclose the TRAM domain.

Belongs to the methylthiotransferase family. MiaB subfamily. Monomer. The cofactor is [4Fe-4S] cluster.

The protein localises to the cytoplasm. It catalyses the reaction N(6)-dimethylallyladenosine(37) in tRNA + (sulfur carrier)-SH + AH2 + 2 S-adenosyl-L-methionine = 2-methylsulfanyl-N(6)-dimethylallyladenosine(37) in tRNA + (sulfur carrier)-H + 5'-deoxyadenosine + L-methionine + A + S-adenosyl-L-homocysteine + 2 H(+). Its function is as follows. Catalyzes the methylthiolation of N6-(dimethylallyl)adenosine (i(6)A), leading to the formation of 2-methylthio-N6-(dimethylallyl)adenosine (ms(2)i(6)A) at position 37 in tRNAs that read codons beginning with uridine. This is tRNA-2-methylthio-N(6)-dimethylallyladenosine synthase from Streptomyces coelicolor (strain ATCC BAA-471 / A3(2) / M145).